A 369-amino-acid chain; its full sequence is Uroporphyrinogen decarboxylase (369 aa).

Residues 28 to 32 (RQAGR), D78, Y154, S209, and H339 contribute to the substrate site.

Belongs to the uroporphyrinogen decarboxylase family. In terms of assembly, homodimer.

It localises to the cytoplasm. It catalyses the reaction uroporphyrinogen III + 4 H(+) = coproporphyrinogen III + 4 CO2. The protein operates within porphyrin-containing compound metabolism; protoporphyrin-IX biosynthesis; coproporphyrinogen-III from 5-aminolevulinate: step 4/4. Catalyzes the decarboxylation of four acetate groups of uroporphyrinogen-III to yield coproporphyrinogen-III. The sequence is that of Uroporphyrinogen decarboxylase from Polaromonas naphthalenivorans (strain CJ2).